We begin with the raw amino-acid sequence, 246 residues long: MSALPIATNHYFDTHFDRPGVKLLPNEFYTTSEDIVLMTVLGSCVAACLHDPVSGIGGMNHFMLPDDGADAGAAASESMRYGAYAMEVLINELIKAGGRRERFEAKVFGGAAVLAGMTTINIGDRNADFVRRYLALERIRITAEDLQGVHPRKVAFMPRTGRAMVKKLRLQVPGVAEREAALAREAVRASAARARAKVELFAAPRPSAPPPARPRIELFGARSGGAGVQPAVQKAASPYAANLSRK.

Positions 225–246 are disordered; it reads GAGVQPAVQKAASPYAANLSRK.

It belongs to the CheD family.

It catalyses the reaction L-glutaminyl-[protein] + H2O = L-glutamyl-[protein] + NH4(+). Probably deamidates glutamine residues to glutamate on methyl-accepting chemotaxis receptors (MCPs), playing an important role in chemotaxis. In Burkholderia vietnamiensis (strain G4 / LMG 22486) (Burkholderia cepacia (strain R1808)), this protein is Probable chemoreceptor glutamine deamidase CheD.